Reading from the N-terminus, the 129-residue chain is GEL complex subunit OPTI (129 aa).

The Cytoplasmic segment spans residues 1-44; that stretch reads MSGGRRKEEPPQPQLANGALKVSVWSKVLRSDAAWDDKDEFLDV. The helical transmembrane segment at 45 to 65 threads the bilayer; that stretch reads IYWFRQIIALVLGVIWGVLPL. A topological domain (lumenal) is located at residue arginine 66. Residues 67-84 traverse the membrane as a helical segment; the sequence is GFLGIAGFCLINAGVLYL. The Cytoplasmic segment spans residues 85 to 103; sequence YFSNYLQIDEEEYGGTWEL. The chain crosses the membrane as a helical span at residues 104 to 127; sequence TKEGFMTSFALFMVIWIIFYTAIH. Residues 128-129 lie on the Lumenal side of the membrane; it reads YD.

Belongs to the EMC6 family. Component of the GET- and EMC-like (GEL) complex, composed of RAB5IF/OPTI and TMCO1. The GEL complex is part of the multi-pass translocon (MPT) complex, composed of three subcomplexes, the GEL complex (composed of RAB5IF/OPTI and TMCO1), the BOS complex (composed of NCLN/Nicalin, NOMO1 and TMEM147) and the PAT complex (composed of WDR83OS/Asterix and CCDC47). The MPT complex associates with the SEC61 complex. Interacts with NDUFS3, NDUFA4, NDUFV1, NDUFA9 and NDUFS8 of the mitochondrial membrane respiratory chain NADH dehydrogenase (Complex I). Interacts with UQCRC2 of the ubiquinol-cytochrome c reductase complex (Complex III). Interacts with COX5A and COX7C of the cytochrome c oxidase complex (Complex IV). Expressed in neuronal cells.

The protein localises to the endoplasmic reticulum membrane. It is found in the mitochondrion inner membrane. In terms of biological role, component of the multi-pass translocon (MPT) complex that mediates insertion of multi-pass membrane proteins into the lipid bilayer of membranes. The MPT complex takes over after the SEC61 complex: following membrane insertion of the first few transmembrane segments of proteins by the SEC61 complex, the MPT complex occludes the lateral gate of the SEC61 complex to promote insertion of subsequent transmembrane regions. Within the MPT complex, the GEL subcomplex may mediate insertion of transmembrane regions into the membrane. In addition to its role in multi-pass membrane insertion, RAB5IF/OPTI also acts as an assembly factor for mitochondrial respiratory complexes. This is GEL complex subunit OPTI from Mus musculus (Mouse).